The primary structure comprises 259 residues: Small ribosomal subunit protein uS2 (259 aa).

Belongs to the universal ribosomal protein uS2 family.

This chain is Small ribosomal subunit protein uS2, found in Streptococcus pneumoniae (strain CGSP14).